Here is a 708-residue protein sequence, read N- to C-terminus: Otogelin-like protein (708 aa).

The VWFD domain maps to 1–113 (KIIVNRLARK…SWEIEKSFEV (113 aa)). Asn-553 is a glycosylation site (N-linked (GlcNAc...) asparagine). 4 cysteine pairs are disulfide-bonded: Cys-616/Cys-672, Cys-637/Cys-686, Cys-648/Cys-703, and Cys-652/Cys-705. Residues 616-708 (CKREERICQK…EPIDCTCQWN (93 aa)) enclose the CTCK domain.

It belongs to the otogelin family.

The protein localises to the secreted. This is Otogelin-like protein (OTOGL) from Pongo abelii (Sumatran orangutan).